A 430-amino-acid chain; its full sequence is Phosphomethylpyrimidine synthase (430 aa).

Substrate is bound by residues Asn-67, Met-96, Tyr-125, His-161, 183 to 185, 224 to 227, and Glu-263; these read SRG and DALR. His-267 contributes to the Zn(2+) binding site. Tyr-290 contributes to the substrate binding site. Position 331 (His-331) interacts with Zn(2+). [4Fe-4S] cluster contacts are provided by Cys-406, Cys-409, and Cys-413.

This sequence belongs to the ThiC family. Homodimer. [4Fe-4S] cluster serves as cofactor.

It carries out the reaction 5-amino-1-(5-phospho-beta-D-ribosyl)imidazole + S-adenosyl-L-methionine = 4-amino-2-methyl-5-(phosphooxymethyl)pyrimidine + CO + 5'-deoxyadenosine + formate + L-methionine + 3 H(+). It functions in the pathway cofactor biosynthesis; thiamine diphosphate biosynthesis. Its function is as follows. Catalyzes the synthesis of the hydroxymethylpyrimidine phosphate (HMP-P) moiety of thiamine from aminoimidazole ribotide (AIR) in a radical S-adenosyl-L-methionine (SAM)-dependent reaction. The polypeptide is Phosphomethylpyrimidine synthase (Campylobacter jejuni subsp. jejuni serotype O:2 (strain ATCC 700819 / NCTC 11168)).